The sequence spans 426 residues: Phosphomethylpyrimidine synthase (426 aa).

Substrate contacts are provided by residues N65, M94, Y123, H162, 184-186, 225-228, and E264; these read SRG and DGMR. A Zn(2+)-binding site is contributed by H268. Y291 is a substrate binding site. Residue H332 coordinates Zn(2+). Residues C408, C411, and C415 each coordinate [4Fe-4S] cluster.

It belongs to the ThiC family. [4Fe-4S] cluster serves as cofactor.

The catalysed reaction is 5-amino-1-(5-phospho-beta-D-ribosyl)imidazole + S-adenosyl-L-methionine = 4-amino-2-methyl-5-(phosphooxymethyl)pyrimidine + CO + 5'-deoxyadenosine + formate + L-methionine + 3 H(+). It functions in the pathway cofactor biosynthesis; thiamine diphosphate biosynthesis. Functionally, catalyzes the synthesis of the hydroxymethylpyrimidine phosphate (HMP-P) moiety of thiamine from aminoimidazole ribotide (AIR) in a radical S-adenosyl-L-methionine (SAM)-dependent reaction. In Methanocaldococcus jannaschii (strain ATCC 43067 / DSM 2661 / JAL-1 / JCM 10045 / NBRC 100440) (Methanococcus jannaschii), this protein is Phosphomethylpyrimidine synthase.